A 340-amino-acid polypeptide reads, in one-letter code: Organic solute transporter subunit alpha (340 aa).

Residues Met-1–Ser-52 are Extracellular-facing. Asn-25 is a glycosylation site (N-linked (GlcNAc...) asparagine). Residues Leu-53–Val-73 traverse the membrane as a helical segment. The Cytoplasmic portion of the chain corresponds to Tyr-74–Thr-87. A helical membrane pass occupies residues Leu-88–Ile-108. Topologically, residues Pro-109–Arg-110 are extracellular. A helical membrane pass occupies residues Ala-111–Met-131. Residues Gln-132 to Gln-186 lie on the Cytoplasmic side of the membrane. The helical transmembrane segment at Tyr-187–Phe-207 threads the bilayer. The Extracellular segment spans residues Asp-208–Leu-219. Residues Trp-220–Phe-240 traverse the membrane as a helical segment. Residues Arg-241 to Lys-255 are Cytoplasmic-facing. A helical transmembrane segment spans residues Phe-256–Leu-276. Topologically, residues Ala-277–Gln-295 are extracellular. The helical transmembrane segment at Val-296–Tyr-316 threads the bilayer. Residues Tyr-317–Ala-340 are Cytoplasmic-facing. At Ser-330 the chain carries Phosphoserine.

Belongs to the OST-alpha family. As to quaternary structure, interacts with SLC51B. The Ost-alpha/Ost-beta complex is a heterodimer composed of alpha (SLC51A) and beta (SLC51B) subunit.

It localises to the cell membrane. The protein localises to the endoplasmic reticulum membrane. It catalyses the reaction taurocholate(out) = taurocholate(in). The catalysed reaction is estrone 3-sulfate(out) = estrone 3-sulfate(in). The enzyme catalyses dehydroepiandrosterone 3-sulfate(out) = dehydroepiandrosterone 3-sulfate(in). It carries out the reaction tauroursodeoxycholate(out) = tauroursodeoxycholate(in). It catalyses the reaction glycoursodeoxycholate(out) = glycoursodeoxycholate(in). The catalysed reaction is glycocholate(out) = glycocholate(in). The enzyme catalyses taurochenodeoxycholate(out) = taurochenodeoxycholate(in). It carries out the reaction glycochenodeoxycholate(out) = glycochenodeoxycholate(in). It catalyses the reaction taurodeoxycholate(out) = taurodeoxycholate(in). The catalysed reaction is glycodeoxycholate(out) = glycodeoxycholate(in). The enzyme catalyses prostaglandin E2(out) = prostaglandin E2(in). Essential component of the Ost-alpha/Ost-beta complex, a heterodimer that acts as the intestinal basolateral transporter responsible for bile acid export from enterocytes into portal blood. Efficiently transports the major species of bile acids (taurocholate). Taurine conjugates are transported more efficiently across the basolateral membrane than glycine-conjugated bile acids. Can also transport steroids such as estrone 3-sulfate and dehydroepiandrosterone 3-sulfate, therefore playing a role in the enterohepatic circulation of sterols. Able to transport eicosanoids such as prostaglandin E2. The polypeptide is Organic solute transporter subunit alpha (SLC51A) (Bos taurus (Bovine)).